Consider the following 195-residue polypeptide: Recombination protein RecR (195 aa).

The C4-type zinc finger occupies C53 to C68. The region spanning S76–P171 is the Toprim domain.

It belongs to the RecR family.

In terms of biological role, may play a role in DNA repair. It seems to be involved in an RecBC-independent recombinational process of DNA repair. It may act with RecF and RecO. The polypeptide is Recombination protein RecR (Anaplasma marginale (strain St. Maries)).